We begin with the raw amino-acid sequence, 539 residues long: D-mannonate oxidoreductase (539 aa).

Position 39 to 50 (W39 to G50) interacts with NAD(+).

This sequence belongs to the mannitol dehydrogenase family. UxuB subfamily.

It catalyses the reaction D-mannonate + NAD(+) = keto-D-fructuronate + NADH + H(+). Its pathway is carbohydrate metabolism. In terms of biological role, catalyzes the reduction of D-fructuronate (D-FruA) to D-mannonate (D-ManA). This Thermotoga maritima (strain ATCC 43589 / DSM 3109 / JCM 10099 / NBRC 100826 / MSB8) protein is D-mannonate oxidoreductase.